Reading from the N-terminus, the 335-residue chain is PA-phosphatase related-family protein DDB_G0275547 (335 aa).

The next 6 membrane-spanning stretches (helical) occupy residues 43 to 63 (VMYL…GILF), 93 to 113 (VLIP…SLIV), 124 to 144 (ILGL…FKCF), 202 to 222 (SITA…FKIF), 226 to 246 (GHIF…LIGI), and 254 to 274 (HTFL…LSCY).

Belongs to the PA-phosphatase related phosphoesterase family.

The protein localises to the membrane. This is PA-phosphatase related-family protein DDB_G0275547 from Dictyostelium discoideum (Social amoeba).